A 249-amino-acid chain; its full sequence is Triosephosphate isomerase (249 aa).

A substrate-binding site is contributed by 9–11; the sequence is NWK. The active-site Electrophile is the histidine 95. Glutamate 167 serves as the catalytic Proton acceptor. Residues glycine 173, serine 213, and 234–235 contribute to the substrate site; that span reads GG.

It belongs to the triosephosphate isomerase family. Homodimer.

It is found in the cytoplasm. It carries out the reaction D-glyceraldehyde 3-phosphate = dihydroxyacetone phosphate. It participates in carbohydrate biosynthesis; gluconeogenesis. The protein operates within carbohydrate degradation; glycolysis; D-glyceraldehyde 3-phosphate from glycerone phosphate: step 1/1. In terms of biological role, involved in the gluconeogenesis. Catalyzes stereospecifically the conversion of dihydroxyacetone phosphate (DHAP) to D-glyceraldehyde-3-phosphate (G3P). This is Triosephosphate isomerase from Dictyoglomus thermophilum (strain ATCC 35947 / DSM 3960 / H-6-12).